The following is a 583-amino-acid chain: Tetratricopeptide repeat protein 39C (583 aa).

The segment at 1-22 is disordered; the sequence is MAGSEQQRPRRRDDGDSDAAAA. 3 TPR repeats span residues 315–348, 353–386, and 485–518; these read SLFMFFKGRIQRLECQINSALTSFHTALELAVDQ, HVCLYEIGWCSMIELNFKDAFDSFERLKNESRWS, and GLKYLLLGAIHKCLGNSEDAVQYFQRAVKDELCR.

Belongs to the TTC39 family.

The sequence is that of Tetratricopeptide repeat protein 39C (TTC39C) from Homo sapiens (Human).